Here is a 397-residue protein sequence, read N- to C-terminus: Phosphoglycerate kinase (397 aa).

Substrate is bound by residues 21 to 23, arginine 36, 59 to 62, arginine 118, and arginine 151; these read DFN and HCGR. Residues lysine 201, glutamate 323, and 353–356 each bind ATP; that span reads GGDT.

This sequence belongs to the phosphoglycerate kinase family. Monomer.

The protein resides in the cytoplasm. The enzyme catalyses (2R)-3-phosphoglycerate + ATP = (2R)-3-phospho-glyceroyl phosphate + ADP. Its pathway is carbohydrate degradation; glycolysis; pyruvate from D-glyceraldehyde 3-phosphate: step 2/5. The protein is Phosphoglycerate kinase of Bartonella tribocorum (strain CIP 105476 / IBS 506).